Here is a 246-residue protein sequence, read N- to C-terminus: DNA repair protein RecO (246 aa).

This sequence belongs to the RecO family.

Involved in DNA repair and RecF pathway recombination. This chain is DNA repair protein RecO, found in Methylorubrum extorquens (strain CM4 / NCIMB 13688) (Methylobacterium extorquens).